Here is a 632-residue protein sequence, read N- to C-terminus: FAD-binding monooxygenase ausB (632 aa).

The interval 1–50 (MASAPEVESVKTPDPASTKTQHTSIAEIHTADQTWNNESNTRLPPNHRHH) is disordered. 2 stretches are compositionally biased toward polar residues: residues 15 to 24 (PASTKTQHTS) and 31 to 43 (ADQT…NTRL). FAD contacts are provided by residues 116–119 (TWYW), 128–129 (DI), and Tyr134. Position 126–128 (126–128 (MCD)) interacts with NADP(+). NADP(+)-binding positions include 269 to 275 (TGSTAIQ) and 292 to 293 (RT).

This sequence belongs to the FAD-binding monooxygenase family. The cofactor is FAD.

It carries out the reaction protoaustinoid A + AH2 + O2 = berkeleyone A + A + H2O. It functions in the pathway secondary metabolite biosynthesis; terpenoid biosynthesis. Its function is as follows. FAD-binding monooxygenase; part of the gene cluster that mediates the biosynthesis of calidodehydroaustin, a fungal meroterpenoid. The first step of the pathway is the synthesis of 3,5-dimethylorsellinic acid by the polyketide synthase ausA. 3,5-dimethylorsellinic acid is then prenylated by the polyprenyl transferase ausN. Further epoxidation by the FAD-dependent monooxygenase ausM and cyclization by the probable terpene cyclase ausL lead to the formation of protoaustinoid A. Protoaustinoid A is then oxidized to spiro-lactone preaustinoid A3 by the combined action of the FAD-binding monooxygenases ausB and ausC, and the dioxygenase ausE. Acid-catalyzed keto-rearrangement and ring contraction of the tetraketide portion of preaustinoid A3 by ausJ lead to the formation of preaustinoid A4. The aldo-keto reductase ausK, with the help of ausH, is involved in the next step by transforming preaustinoid A4 into isoaustinone which is in turn hydroxylated by the P450 monooxygenase ausI to form austinolide. The cytochrome P450 monooxygenase ausG modifies austinolide to austinol. Austinol is further acetylated to austin by the O-acetyltransferase ausP, which spontaneously changes to dehydroaustin. The cytochrome P450 monooxygenase ausR then converts dehydroaustin is into 7-dehydrodehydroaustin. The hydroxylation catalyzed by ausR permits the O-acetyltransferase ausQ to add an additional acetyl group to the molecule, leading to the formation of acetoxydehydroaustin. The short chain dehydrogenase ausT catalyzes the reduction of the double bond present between carbon atoms 1 and 2 to convert 7-dehydrodehydroaustin into 1,2-dihydro-7-hydroxydehydroaustin. AusQ catalyzes not only an acetylation reaction but also the addition of the PKS ausV diketide product to 1,2-dihydro-7-hydroxydehydroaustin, forming precalidodehydroaustin. Finally, the iron/alpha-ketoglutarate-dependent dioxygenase converts precalidodehydroaustin into calidodehydroaustin. The polypeptide is FAD-binding monooxygenase ausB (Aspergillus calidoustus).